The sequence spans 342 residues: L-lysine 2,3-aminomutase (342 aa).

The 224-residue stretch at 106–329 (HKYQNRALLL…PRLAREIGGE (224 aa)) folds into the Radical SAM core domain. Positions 120, 124, and 127 each coordinate [4Fe-4S] cluster. Position 332 is an N6-(pyridoxal phosphate)lysine (Lys332).

The protein belongs to the radical SAM superfamily. KamA family. [4Fe-4S] cluster serves as cofactor. Requires pyridoxal 5'-phosphate as cofactor.

It carries out the reaction L-lysine = D-beta-lysine. Its function is as follows. With EpmA is involved in the beta-lysylation step of the post-translational modification of translation elongation factor P (EF-P) on 'Lys-34'. EpmB appears to act before EpmA. Displays lysine 2,3-aminomutase activity, producing (R)-beta-lysine from (S)-alpha-lysine (L-lysine). This Salmonella typhimurium (strain LT2 / SGSC1412 / ATCC 700720) protein is L-lysine 2,3-aminomutase (epmB).